The chain runs to 303 residues: Ubiquinone biosynthesis protein COQ4, mitochondrial (303 aa).

Zn(2+) is bound by residues histidine 191, aspartate 192, histidine 195, and glutamate 207.

Belongs to the COQ4 family. In terms of assembly, component of a multi-subunit COQ enzyme complex, composed of at least COQ3, COQ4, COQ5, COQ6, COQ7 and COQ9. It depends on Zn(2+) as a cofactor.

The protein localises to the mitochondrion inner membrane. It carries out the reaction a 4-hydroxy-3-methoxy-5-(all-trans-polyprenyl)benzoate + H(+) = a 2-methoxy-6-(all-trans-polyprenyl)phenol + CO2. It participates in cofactor biosynthesis; ubiquinone biosynthesis. In terms of biological role, lyase that catalyzes the C1-decarboxylation of 4-hydroxy-3-methoxy-5-(all-trans-polyprenyl)benzoic acid into 2-methoxy-6-(all-trans-polyprenyl)phenol during ubiquinone biosynthesis. This chain is Ubiquinone biosynthesis protein COQ4, mitochondrial, found in Komagataella phaffii (strain GS115 / ATCC 20864) (Yeast).